The following is a 313-amino-acid chain: Ribosomal RNA small subunit methyltransferase H (313 aa).

S-adenosyl-L-methionine is bound by residues 35-37 (GGH), Asp-55, Phe-79, Asp-101, and Gln-108.

The protein belongs to the methyltransferase superfamily. RsmH family.

Its subcellular location is the cytoplasm. It catalyses the reaction cytidine(1402) in 16S rRNA + S-adenosyl-L-methionine = N(4)-methylcytidine(1402) in 16S rRNA + S-adenosyl-L-homocysteine + H(+). Specifically methylates the N4 position of cytidine in position 1402 (C1402) of 16S rRNA. The sequence is that of Ribosomal RNA small subunit methyltransferase H from Escherichia coli O127:H6 (strain E2348/69 / EPEC).